Here is a 142-residue protein sequence, read N- to C-terminus: ATP synthase epsilon chain (142 aa).

This sequence belongs to the ATPase epsilon chain family. As to quaternary structure, F-type ATPases have 2 components, CF(1) - the catalytic core - and CF(0) - the membrane proton channel. CF(1) has five subunits: alpha(3), beta(3), gamma(1), delta(1), epsilon(1). CF(0) has three main subunits: a, b and c.

The protein localises to the cell inner membrane. Its function is as follows. Produces ATP from ADP in the presence of a proton gradient across the membrane. This Shewanella baltica (strain OS185) protein is ATP synthase epsilon chain.